Reading from the N-terminus, the 467-residue chain is tRNA-2-methylthio-N(6)-dimethylallyladenosine synthase (467 aa).

The region spanning 22 to 138 (GSYWITTFGC…LETLLNKVET (117 aa)) is the MTTase N-terminal domain. The [4Fe-4S] cluster site is built by Cys-31, Cys-67, Cys-101, Cys-173, Cys-177, and Cys-180. Positions 159-396 (RDSSICAWVN…NSLVEIKAKE (238 aa)) constitute a Radical SAM core domain. The TRAM domain maps to 399–467 (VRYKDRVEEV…AFSLSGVIEN (69 aa)).

This sequence belongs to the methylthiotransferase family. MiaB subfamily. As to quaternary structure, monomer. [4Fe-4S] cluster is required as a cofactor.

It is found in the cytoplasm. It catalyses the reaction N(6)-dimethylallyladenosine(37) in tRNA + (sulfur carrier)-SH + AH2 + 2 S-adenosyl-L-methionine = 2-methylsulfanyl-N(6)-dimethylallyladenosine(37) in tRNA + (sulfur carrier)-H + 5'-deoxyadenosine + L-methionine + A + S-adenosyl-L-homocysteine + 2 H(+). Catalyzes the methylthiolation of N6-(dimethylallyl)adenosine (i(6)A), leading to the formation of 2-methylthio-N6-(dimethylallyl)adenosine (ms(2)i(6)A) at position 37 in tRNAs that read codons beginning with uridine. The protein is tRNA-2-methylthio-N(6)-dimethylallyladenosine synthase of Prochlorococcus marinus (strain MIT 9211).